Here is a 199-residue protein sequence, read N- to C-terminus: Probable GTP-binding protein EngB (199 aa).

One can recognise an EngB-type G domain in the interval 21-196 (TKPEYAFIGR…LTYIDEINKQ (176 aa)). Residues 29–36 (GRSNVGKS), 56–60 (GKTQL), 74–77 (DLPG), 141–144 (TKID), and 175–177 (TSS) each bind GTP. The Mg(2+) site is built by Ser-36 and Thr-58.

Belongs to the TRAFAC class TrmE-Era-EngA-EngB-Septin-like GTPase superfamily. EngB GTPase family. The cofactor is Mg(2+).

In terms of biological role, necessary for normal cell division and for the maintenance of normal septation. This Cytophaga hutchinsonii (strain ATCC 33406 / DSM 1761 / CIP 103989 / NBRC 15051 / NCIMB 9469 / D465) protein is Probable GTP-binding protein EngB.